Here is a 187-residue protein sequence, read N- to C-terminus: Protein GrpE (187 aa).

A compositionally biased stretch (basic and acidic residues) spans 1-11 (MTDSSNEHETE). Positions 1 to 23 (MTDSSNEHETENPSVPNPDNEIQ) are disordered.

Belongs to the GrpE family. Homodimer.

The protein localises to the cytoplasm. Functionally, participates actively in the response to hyperosmotic and heat shock by preventing the aggregation of stress-denatured proteins, in association with DnaK and GrpE. It is the nucleotide exchange factor for DnaK and may function as a thermosensor. Unfolded proteins bind initially to DnaJ; upon interaction with the DnaJ-bound protein, DnaK hydrolyzes its bound ATP, resulting in the formation of a stable complex. GrpE releases ADP from DnaK; ATP binding to DnaK triggers the release of the substrate protein, thus completing the reaction cycle. Several rounds of ATP-dependent interactions between DnaJ, DnaK and GrpE are required for fully efficient folding. The protein is Protein GrpE of Chlamydia felis (strain Fe/C-56) (Chlamydophila felis).